The sequence spans 275 residues: MSNLQSIIEAAFERRAEITPKTVDAQTKAAIEEVIAGLDCGKYRVAEKIDGDWVTHQWLKKAVLLSFRINDNQLIDGAETKYYDKVALKFADYTEERFQQEGFRVVPSATVRKGAYIAKNTVLMPSYVNIGAFVDEGTMVDTWVTVGSCAQIGKNVHLSGGVGIGGVLEPLQANPTIIGDNCFIGARSEIVEGVIVEDGCVISMGVFIGQSTKIYDRETGEVHYGRVPAGSVVVSGSLPSKDGSHSLYCAVIVKKVDAKTLGKVGLNELLRTIEE.

Arginine 104 and aspartate 141 together coordinate substrate.

The protein belongs to the transferase hexapeptide repeat family. Homotrimer.

The protein resides in the cytoplasm. It carries out the reaction (S)-2,3,4,5-tetrahydrodipicolinate + succinyl-CoA + H2O = (S)-2-succinylamino-6-oxoheptanedioate + CoA. The protein operates within amino-acid biosynthesis; L-lysine biosynthesis via DAP pathway; LL-2,6-diaminopimelate from (S)-tetrahydrodipicolinate (succinylase route): step 1/3. In Mannheimia succiniciproducens (strain KCTC 0769BP / MBEL55E), this protein is 2,3,4,5-tetrahydropyridine-2,6-dicarboxylate N-succinyltransferase.